A 388-amino-acid polypeptide reads, in one-letter code: LL-diaminopimelate aminotransferase (388 aa).

Positions 16 and 41 each coordinate substrate. Residues Tyr-70, 104 to 105 (SK), Tyr-129, Asn-179, Tyr-210, and 239 to 241 (SLS) each bind pyridoxal 5'-phosphate. Lys-105, Tyr-129, and Asn-179 together coordinate substrate. Lys-242 bears the N6-(pyridoxal phosphate)lysine mark. Arg-250 serves as a coordination point for pyridoxal 5'-phosphate. Arg-368 is a substrate binding site.

It belongs to the class-I pyridoxal-phosphate-dependent aminotransferase family. LL-diaminopimelate aminotransferase subfamily. In terms of assembly, homodimer. Pyridoxal 5'-phosphate serves as cofactor.

The enzyme catalyses (2S,6S)-2,6-diaminopimelate + 2-oxoglutarate = (S)-2,3,4,5-tetrahydrodipicolinate + L-glutamate + H2O + H(+). It functions in the pathway amino-acid biosynthesis; L-lysine biosynthesis via DAP pathway; LL-2,6-diaminopimelate from (S)-tetrahydrodipicolinate (aminotransferase route): step 1/1. Involved in the synthesis of meso-diaminopimelate (m-DAP or DL-DAP), required for both lysine and peptidoglycan biosynthesis. Catalyzes the direct conversion of tetrahydrodipicolinate to LL-diaminopimelate. This Oleidesulfovibrio alaskensis (strain ATCC BAA-1058 / DSM 17464 / G20) (Desulfovibrio alaskensis) protein is LL-diaminopimelate aminotransferase.